We begin with the raw amino-acid sequence, 200 residues long: Recombination protein RecR (200 aa).

The C4-type zinc-finger motif lies at cysteine 58–cysteine 75. A Toprim domain is found at glutamine 82–proline 177.

The protein belongs to the RecR family.

Its function is as follows. May play a role in DNA repair. It seems to be involved in an RecBC-independent recombinational process of DNA repair. It may act with RecF and RecO. The chain is Recombination protein RecR from Chlamydia pneumoniae (Chlamydophila pneumoniae).